We begin with the raw amino-acid sequence, 392 residues long: Formate-dependent phosphoribosylglycinamide formyltransferase (392 aa).

N(1)-(5-phospho-beta-D-ribosyl)glycinamide contacts are provided by residues 15–16 and E75; that span reads EL. ATP-binding positions include R107, K148, 153–158, 188–191, and E196; these read SSGKGQ and EEFL. Residues 112–302 form the ATP-grasp domain; sequence DLASEELALL…EFELHLRAVL (191 aa). Residues E261 and E273 each contribute to the Mg(2+) site. N(1)-(5-phospho-beta-D-ribosyl)glycinamide is bound by residues D280, K350, and 357–358; that span reads RR.

It belongs to the PurK/PurT family. In terms of assembly, homodimer.

The catalysed reaction is N(1)-(5-phospho-beta-D-ribosyl)glycinamide + formate + ATP = N(2)-formyl-N(1)-(5-phospho-beta-D-ribosyl)glycinamide + ADP + phosphate + H(+). It functions in the pathway purine metabolism; IMP biosynthesis via de novo pathway; N(2)-formyl-N(1)-(5-phospho-D-ribosyl)glycinamide from N(1)-(5-phospho-D-ribosyl)glycinamide (formate route): step 1/1. Functionally, involved in the de novo purine biosynthesis. Catalyzes the transfer of formate to 5-phospho-ribosyl-glycinamide (GAR), producing 5-phospho-ribosyl-N-formylglycinamide (FGAR). Formate is provided by PurU via hydrolysis of 10-formyl-tetrahydrofolate. The protein is Formate-dependent phosphoribosylglycinamide formyltransferase of Prochlorococcus marinus (strain MIT 9303).